The primary structure comprises 1349 residues: Spike glycoprotein (1349 aa).

The N-terminal stretch at 1 to 13 (MFFILLITLPSVF) is a signal peptide. Topologically, residues 14–1293 (AVIGDLKCNT…GTYEYYVKWP (1280 aa)) are extracellular. Residues 15 to 298 (VIGDLKCNTS…DFMSEIMCKT (284 aa)) form the BetaCoV S1-NTD domain. Cystine bridges form between Cys-21/Cys-165, Cys-160/Cys-193, Cys-172/Cys-252, Cys-286/Cys-296, Cys-331/Cys-356, Cys-374/Cys-427, and Cys-386/Cys-601. Residues Asn-22, Asn-59, and Asn-133 are each glycosylated (N-linked (GlcNAc...) asparagine; by host). N-linked (GlcNAc...) asparagine; by host glycosylation occurs at Asn-198. The region spanning 329–603 (PNCDIEAWLN…DVNSGTTCST (275 aa)) is the BetaCoV S1-CTD domain. N-linked (GlcNAc...) asparagine; by host glycans are attached at residues Asn-437, Asn-456, Asn-512, Asn-611, Asn-635, Asn-662, Asn-682, Asn-700, Asn-725, Asn-774, and Asn-881. Fusion peptide regions lie at residues 900 to 921 (SAIE…VQAY) and 919 to 939 (QAYN…VQSY). N-linked (GlcNAc...) asparagine; by host glycosylation occurs at Asn-923. The cysteines at positions 924 and 935 are disulfide-linked. The segment at 1000-1050 (QKLIASAFNNALDSIQEGFDATNSALVKIQAVVNANAEALNNLLQQLSNRF) is heptad repeat 1. A coiled-coil region spans residues 1029–1073 (QAVVNANAEALNNLLQQLSNRFGAISASLQEILSRLDALEAKAQI). Residues Asn-1180, Asn-1210, Asn-1220, Asn-1239, Asn-1253, and Asn-1274 are each glycosylated (N-linked (GlcNAc...) asparagine; by host). Residues 1244–1282 (APDLSFDYINVTFLDLQDEMNRLQEAIKVLNHSYINLKD) form a heptad repeat 2 region. Positions 1255–1283 (TFLDLQDEMNRLQEAIKVLNHSYINLKDI) form a coiled coil. Residues 1294 to 1314 (WYVWLLICLAGVVMLVLLFFI) form a helical membrane-spanning segment. Residues 1315–1349 (CCCTGCGTSCFKKCGGCFDDYTGHQEFVIKTSHDD) lie on the Cytoplasmic side of the membrane. Residues 1345-1349 (TSHDD) carry the KxHxx motif.

This sequence belongs to the betacoronaviruses spike protein family. As to quaternary structure, homotrimer; each monomer consists of a S1 and a S2 subunit. The resulting peplomers protrude from the virus surface as spikes. Specific enzymatic cleavages in vivo yield mature proteins. The precursor is processed into S1 and S2 by host cell furin or another cellular protease to yield the mature S1 and S2 proteins. Additionally, a second cleavage leads to the release of a fusion peptide after viral attachment to host cell receptor. In terms of processing, the cytoplasmic Cys-rich domain is palmitoylated. Spike glycoprotein is digested within host endosomes.

It is found in the virion membrane. The protein resides in the host endoplasmic reticulum-Golgi intermediate compartment membrane. The protein localises to the host cell membrane. Attaches the virion to the cell membrane by interacting with host receptor, initiating the infection. In terms of biological role, mediates fusion of the virion and cellular membranes by acting as a class I viral fusion protein. Under the current model, the protein has at least three conformational states: pre-fusion native state, pre-hairpin intermediate state, and post-fusion hairpin state. During viral and target cell membrane fusion, the coiled coil regions (heptad repeats) assume a trimer-of-hairpins structure, positioning the fusion peptide in close proximity to the C-terminal region of the ectodomain. The formation of this structure appears to drive apposition and subsequent fusion of viral and target cell membranes. Its function is as follows. Acts as a viral fusion peptide which is unmasked following S2 cleavage occurring upon virus endocytosis. The protein is Spike glycoprotein of Porcine hemagglutinating encephalomyelitis virus (strain IAF-404) (HEV).